A 303-amino-acid polypeptide reads, in one-letter code: Oxygen-dependent coproporphyrinogen-III oxidase (303 aa).

Substrate is bound at residue serine 93. A divalent metal cation contacts are provided by histidine 97 and histidine 107. Residue histidine 107 is the Proton donor of the active site. Position 109–111 (109–111) interacts with substrate; sequence NVR. Positions 146 and 176 each coordinate a divalent metal cation. The interval 241–276 is important for dimerization; sequence YVEFNLVYDRGTLFGLQSGGRTESILMSLPPQVRWG. Residue 259 to 261 coordinates substrate; it reads GGR.

This sequence belongs to the aerobic coproporphyrinogen-III oxidase family. In terms of assembly, homodimer. A divalent metal cation is required as a cofactor.

The protein localises to the cytoplasm. The catalysed reaction is coproporphyrinogen III + O2 + 2 H(+) = protoporphyrinogen IX + 2 CO2 + 2 H2O. The protein operates within porphyrin-containing compound metabolism; protoporphyrin-IX biosynthesis; protoporphyrinogen-IX from coproporphyrinogen-III (O2 route): step 1/1. Functionally, involved in the heme biosynthesis. Catalyzes the aerobic oxidative decarboxylation of propionate groups of rings A and B of coproporphyrinogen-III to yield the vinyl groups in protoporphyrinogen-IX. In Pseudomonas putida (strain W619), this protein is Oxygen-dependent coproporphyrinogen-III oxidase.